Reading from the N-terminus, the 353-residue chain is UPF0283 membrane protein KPN78578_12740 (353 aa).

3 helical membrane passes run 70–90, 99–119, and 213–233; these read MVSA…VQWT, WIAL…VGSL, and ESTL…FIAW.

The protein belongs to the UPF0283 family.

It is found in the cell inner membrane. This Klebsiella pneumoniae subsp. pneumoniae (strain ATCC 700721 / MGH 78578) protein is UPF0283 membrane protein KPN78578_12740.